The sequence spans 816 residues: Phosphatidylinositol 4-kinase beta (816 aa).

The segment at methionine 1 to leucine 30 is disordered. Glycine 2 bears the N-acetylglycine mark. The tract at residues glycine 2–isoleucine 68 is interaction with ACBD3. Residues cysteine 52 to serine 242 enclose the PIK helical domain. The disordered stretch occupies residues alanine 248–serine 318. Residue serine 258 is modified to Phosphoserine. At threonine 263 the chain carries Phosphothreonine. A phosphoserine mark is found at serine 266, serine 275, serine 277, serine 284, and serine 294. Composition is skewed to polar residues over residues aspartate 278 to lysine 297 and serine 306 to serine 318. The residue at position 428 (serine 428) is a Phosphoserine. At threonine 438 the chain carries Phosphothreonine. Serine 511 is modified (phosphoserine). Residues threonine 517 and threonine 519 each carry the phosphothreonine modification. The 267-residue stretch at glutamate 535–threonine 801 folds into the PI3K/PI4K catalytic domain. The interval valine 541 to glycine 547 is G-loop. The catalytic loop stretch occupies residues glutamine 668–asparagine 676. The tract at residues histidine 687–threonine 711 is activation loop.

It belongs to the PI3/PI4-kinase family. Type III PI4K subfamily. Interacts with ARF1 and ARF3 in the Golgi complex, but not with ARF4, ARF5 or ARF6. Interacts with NCS1/FREQ in a calcium-independent manner. Interacts with CALN1/CABP8 and CALN2/CABP7; in a calcium-dependent manner; this interaction competes with NCS1/FREQ binding. Interacts with ACBD3. Interacts with ARMH3, YWHAB, YWHAE, YWHAG, YWHAH, YWHAQ, YWHAZ and SFN. Interacts with GGA2 (via VHS domain); the interaction is important for PI4KB location at the Golgi apparatus membrane. Interacts with ATG9A. The cofactor is Mg(2+). Mn(2+) serves as cofactor.

The protein localises to the endomembrane system. The protein resides in the mitochondrion outer membrane. Its subcellular location is the rough endoplasmic reticulum membrane. It localises to the golgi apparatus. It is found in the golgi apparatus membrane. It carries out the reaction a 1,2-diacyl-sn-glycero-3-phospho-(1D-myo-inositol) + ATP = a 1,2-diacyl-sn-glycero-3-phospho-(1D-myo-inositol 4-phosphate) + ADP + H(+). Its activity is regulated as follows. Inhibited by wortmannin. Increased kinase activity upon interaction with NCS1/FREQ. Its function is as follows. Phosphorylates phosphatidylinositol (PI) in the first committed step in the production of the second messenger inositol-1,4,5,-trisphosphate (PIP). May regulate Golgi disintegration/reorganization during mitosis, possibly via its phosphorylation. Involved in Golgi-to-plasma membrane trafficking. May play an important role in the inner ear development. This chain is Phosphatidylinositol 4-kinase beta (PI4KB), found in Otolemur garnettii (Small-eared galago).